Reading from the N-terminus, the 1778-residue chain is Internalin I (1778 aa).

Positions methionine 1–alanine 28 are cleaved as a signal peptide. The tract at residues aspartate 36–lysine 101 is disordered. Residues isoleucine 51 to alanine 62 show a composition bias toward acidic residues. Positions glutamate 63–glutamate 88 are enriched in basic and acidic residues. LRR repeat units follow at residues alanine 155 to glutamine 179, asparagine 183 to valine 204, asparagine 205 to valine 227, asparagine 228 to proline 250, valine 251 to glycine 272, glutamate 277 to proline 298, lysine 299 to threonine 321, lysine 322 to serine 344, glutamate 345 to proline 367, asparagine 368 to proline 389, lysine 390 to proline 412, glutamine 413 to proline 434, lysine 435 to proline 456, arginine 457 to proline 478, leucine 479 to proline 500, serine 501 to proline 522, serine 523 to proline 544, asparagine 545 to proline 566, lysine 567 to proline 588, serine 589 to proline 610, aspartate 611 to proline 632, asparagine 633 to aspartate 653, lysine 657 to serine 678, asparagine 685 to serine 707, arginine 708 to threonine 729, asparagine 730 to glutamate 751, and asparagine 752 to valine 773. The LRRCT domain maps to threonine 785–glutamate 872. 3 MucBP domains span residues aspartate 1510 to valine 1569, alanine 1575 to isoleucine 1634, and serine 1644 to valine 1705. Residues serine 1716 to serine 1742 are disordered. The span at lysine 1725–serine 1742 shows a compositional bias: polar residues. The LPXTG sorting signal motif lies at leucine 1743–glycine 1747. Threonine 1746 is subject to Pentaglycyl murein peptidoglycan amidated threonine. Residues glycine 1747–glutamine 1778 constitute a propeptide, removed by sortase.

The protein belongs to the internalin family.

The protein resides in the secreted. It is found in the cell wall. Functionally, a role in virulence could not be demonstrated. The chain is Internalin I (inlI) from Listeria monocytogenes serovar 1/2a (strain ATCC BAA-679 / EGD-e).